Here is a 701-residue protein sequence, read N- to C-terminus: DNA ligase A (701 aa).

A disordered region spans residues 1–23 (MSEKATGEVEAELPEHPDADERR). NAD(+)-binding positions include 49 to 53 (DAEFD), 99 to 100 (SL), and glutamate 129. Lysine 131 acts as the N6-AMP-lysine intermediate in catalysis. NAD(+) is bound by residues arginine 152, glutamate 192, lysine 308, and lysine 332. Cysteine 426, cysteine 429, cysteine 445, and cysteine 451 together coordinate Zn(2+). The BRCT domain maps to 615–701 (SIERTLEGLS…EQGPPVEPAE (87 aa)).

It belongs to the NAD-dependent DNA ligase family. LigA subfamily. Mg(2+) serves as cofactor. Requires Mn(2+) as cofactor.

The catalysed reaction is NAD(+) + (deoxyribonucleotide)n-3'-hydroxyl + 5'-phospho-(deoxyribonucleotide)m = (deoxyribonucleotide)n+m + AMP + beta-nicotinamide D-nucleotide.. In terms of biological role, DNA ligase that catalyzes the formation of phosphodiester linkages between 5'-phosphoryl and 3'-hydroxyl groups in double-stranded DNA using NAD as a coenzyme and as the energy source for the reaction. It is essential for DNA replication and repair of damaged DNA. Probably the only ligase required for non-homologous end joining (NHEJ) repair of 3-overhangs. The protein is DNA ligase A of Mycolicibacterium smegmatis (strain ATCC 700084 / mc(2)155) (Mycobacterium smegmatis).